A 288-amino-acid chain; its full sequence is Ribonuclease HIII (288 aa).

One can recognise an RNase H type-2 domain in the interval 76-288; that stretch reads YSAIGSDEVG…KNITKQFIKN (213 aa). A divalent metal cation is bound by residues Asp82, Glu83, and Asp185.

It belongs to the RNase HII family. RnhC subfamily. Requires Mn(2+) as cofactor. Mg(2+) is required as a cofactor.

It localises to the cytoplasm. It carries out the reaction Endonucleolytic cleavage to 5'-phosphomonoester.. Endonuclease that specifically degrades the RNA of RNA-DNA hybrids. This is Ribonuclease HIII from Phytoplasma mali (strain AT).